The chain runs to 580 residues: NADH-ubiquinone oxidoreductase chain 5 (580 aa).

The next 16 membrane-spanning stretches (helical) occupy residues 12–32, 50–70, 92–112, 113–133, 153–173, 183–203, 215–235, 244–264, 274–293, 298–320, 343–363, 367–387, 427–447, 463–483, 496–516, and 560–580; these read FYFL…FLLM, IVMT…VLLI, ILLV…PNLI, SILL…IYFQ, VALL…YIFY, MMII…QIPF, TPVS…YLLI, WWMA…AGLG, IIAL…LSMG, AFFH…GSII, CSCF…AGFY, LILE…LFFF, ICFL…LMFL, LFVC…KLFF, FVGS…NYPL, and IYLL…VLVN.

Belongs to the complex I subunit 5 family.

Its subcellular location is the mitochondrion inner membrane. The enzyme catalyses a ubiquinone + NADH + 5 H(+)(in) = a ubiquinol + NAD(+) + 4 H(+)(out). Functionally, core subunit of the mitochondrial membrane respiratory chain NADH dehydrogenase (Complex I) that is believed to belong to the minimal assembly required for catalysis. Complex I functions in the transfer of electrons from NADH to the respiratory chain. The immediate electron acceptor for the enzyme is believed to be ubiquinone. This is NADH-ubiquinone oxidoreductase chain 5 (mt:ND5) from Anopheles gambiae (African malaria mosquito).